The primary structure comprises 140 residues: Organic hydroperoxide resistance protein-like (140 aa).

The protein belongs to the OsmC/Ohr family.

This Staphylococcus aureus (strain USA300) protein is Organic hydroperoxide resistance protein-like.